We begin with the raw amino-acid sequence, 219 residues long: Inner membrane protein YghB (219 aa).

Residues 1 to 17 (MAVIQDIIAALWQHDFA) are Cytoplasmic-facing. Residues 18-38 (ALANPHVVSVVYFVMFATLFL) form a helical membrane-spanning segment. Residues 39-67 (ENGLLPASFLPGDSLLLLAGALIAQDVMH) are Periplasmic-facing. A helical transmembrane segment spans residues 68-88 (FLPTIGILTAAASLGCWLSYI). The Cytoplasmic portion of the chain corresponds to 89-160 (QGRWLGNTRT…RRFQFFNWLS (72 aa)). The chain crosses the membrane as a helical span at residues 161–181 (GLLWVTVVTSFGYALSMIPFV). Residues 182-191 (KRHEDQVMTF) lie on the Periplasmic side of the membrane. The chain crosses the membrane as a helical span at residues 192–212 (LMILPVALLVAGLLGTLVVVI). At 213–219 (KKKYCNA) the chain is on the cytoplasmic side.

The protein belongs to the DedA family.

It localises to the cell inner membrane. The sequence is that of Inner membrane protein YghB (yghB) from Salmonella typhimurium (strain LT2 / SGSC1412 / ATCC 700720).